Here is a 590-residue protein sequence, read N- to C-terminus: MIPSDFIDELLAKTDIVDIIDEQVPLKKGGANYMACCPFHKEKTPSFSVSPTKQFYHCFSCGAHGSAIGFVMEHQGLSFPEAVQFLADRVGMVVPKVHGQNDNPEVRAERKKKQQTLEETTAAAADFYAQQLKFNPAAKAYLDKRGLSAEVIAHYGLGYAPDGWQPLTQVFQPYPNTALVDTGMVIDNEGRHYDRFRHRIMFPIRNPRGQVIGFGGRVLDDSKPKYLNSPDTPLFDKGKNLYGLYEGRAAVKEAGRILVVEGYMDVVALAQFGVGYGVAALGTATTAEHVKILMRQADSIYFCFDGDSAGRKAAWRALENALPQLKDDKSLHFLFLPEEHDPDSYIRAYGKAQFEDALLNQSKPLSEYFWEHLSDGIHLNTQEGKAELVKTSSPLLAQITAPALAYLLKQRLSELVGIDPDNLAQLLGQEAPKRHVKQKNYKLPPISVKQPVMPTLVQRQIRSLLINPDWAAYIDLPDYLALDGDFACLANLAETIKNHPSVPATAQVLEHMRGSPYEETINRIFRSALQSEEMEGGGEEDCENFQIGIKKLLNELKYSQIEALKQKSLQSGLNESEKKLLLSLLTAKQN.

The CHC2-type zinc finger occupies 37-61; that stretch reads CPFHKEKTPSFSVSPTKQFYHCFSC. One can recognise a Toprim domain in the interval 255–337; that stretch reads GRILVVEGYM…DKSLHFLFLP (83 aa). Residues Glu261, Asp305, and Asp307 each contribute to the Mg(2+) site.

This sequence belongs to the DnaG primase family. As to quaternary structure, monomer. Interacts with DnaB. Zn(2+) serves as cofactor. Requires Mg(2+) as cofactor.

The enzyme catalyses ssDNA + n NTP = ssDNA/pppN(pN)n-1 hybrid + (n-1) diphosphate.. In terms of biological role, RNA polymerase that catalyzes the synthesis of short RNA molecules used as primers for DNA polymerase during DNA replication. This Neisseria meningitidis serogroup A / serotype 4A (strain DSM 15465 / Z2491) protein is DNA primase.